The primary structure comprises 162 residues: Dihydrofolate reductase (162 aa).

The 159-residue stretch at lysine 3–arginine 161 folds into the DHFR domain. Residue isoleucine 7 to alanine 9 participates in substrate binding. NADP(+) is bound by residues alanine 8–alanine 9 and isoleucine 16–alanine 21. Position 29 (aspartate 29) interacts with substrate. Glycine 45–threonine 48 provides a ligand contact to NADP(+). Arginine 60 provides a ligand contact to substrate. NADP(+)-binding positions include isoleucine 65–glutamine 68 and methionine 98–isoleucine 103. Threonine 117 is a substrate binding site.

It belongs to the dihydrofolate reductase family.

It catalyses the reaction (6S)-5,6,7,8-tetrahydrofolate + NADP(+) = 7,8-dihydrofolate + NADPH + H(+). Its pathway is cofactor biosynthesis; tetrahydrofolate biosynthesis; 5,6,7,8-tetrahydrofolate from 7,8-dihydrofolate: step 1/1. Key enzyme in folate metabolism. Catalyzes an essential reaction for de novo glycine and purine synthesis, and for DNA precursor synthesis. The protein is Dihydrofolate reductase (folA) of Neisseria meningitidis serogroup A / serotype 4A (strain DSM 15465 / Z2491).